We begin with the raw amino-acid sequence, 220 residues long: 7-cyano-7-deazaguanine synthase (220 aa).

7 to 17 (LSGGMDSSTLA) lines the ATP pocket. Zn(2+) is bound by residues C187, C195, C198, and C201.

It belongs to the QueC family. It depends on Zn(2+) as a cofactor.

It carries out the reaction 7-carboxy-7-deazaguanine + NH4(+) + ATP = 7-cyano-7-deazaguanine + ADP + phosphate + H2O + H(+). The protein operates within purine metabolism; 7-cyano-7-deazaguanine biosynthesis. Its function is as follows. Catalyzes the ATP-dependent conversion of 7-carboxy-7-deazaguanine (CDG) to 7-cyano-7-deazaguanine (preQ(0)). In Methanospirillum hungatei JF-1 (strain ATCC 27890 / DSM 864 / NBRC 100397 / JF-1), this protein is 7-cyano-7-deazaguanine synthase.